The following is a 991-amino-acid chain: Pentatricopeptide repeat-containing protein At1g73710 (991 aa).

Disordered regions lie at residues 1-27 (MLQP…HHHH) and 61-81 (SSSS…RKRK). The segment covering 15-27 (VRHHHHHHHHHHH) has biased composition (basic residues). Over residues 61 to 73 (SSSSVSPPRCSKP) the composition is skewed to low complexity. PPR repeat units lie at residues 144 to 178 (NVIH…GVLP), 179 to 213 (TNNT…MHFP), 214 to 248 (DEVT…KVDL), 304 to 338 (LTST…GVPI), 339 to 373 (DTVT…GISP), 374 to 408 (DTKT…GLFP), 409 to 443 (DTVT…SIRI), 444 to 474 (DEHS…FQLD), 478 to 513 (SSTT…GQRN), 514 to 548 (DVLE…GTWP), 549 to 583 (DECT…GCKP), 584 to 618 (GCKT…GVKP), 619 to 653 (NEVV…GVQS), 654 to 688 (NHIV…EGGP), 689 to 719 (DVAA…LREK), 723 to 757 (DVIS…GLLS), 758 to 792 (DCTS…RKLL), 862 to 896 (EHFA…GLEP), and 897 to 931 (DIVT…ELEP). Positions 965–974 (AERECSSRSG) are enriched in basic and acidic residues. The interval 965-991 (AERECSSRSGEEEEDDEEENSEEDEAF) is disordered. Residues 975–991 (EEEEDDEEENSEEDEAF) show a composition bias toward acidic residues.

The protein belongs to the PPR family. P subfamily.

The polypeptide is Pentatricopeptide repeat-containing protein At1g73710 (Arabidopsis thaliana (Mouse-ear cress)).